Consider the following 131-residue polypeptide: Holo-[acyl-carrier-protein] synthase (131 aa).

2 residues coordinate Mg(2+): Asp8 and Glu63.

It belongs to the P-Pant transferase superfamily. AcpS family. The cofactor is Mg(2+).

It localises to the cytoplasm. It catalyses the reaction apo-[ACP] + CoA = holo-[ACP] + adenosine 3',5'-bisphosphate + H(+). In terms of biological role, transfers the 4'-phosphopantetheine moiety from coenzyme A to a Ser of acyl-carrier-protein. This is Holo-[acyl-carrier-protein] synthase from Shewanella pealeana (strain ATCC 700345 / ANG-SQ1).